Here is a 547-residue protein sequence, read N- to C-terminus: Chaperonin GroEL (547 aa).

ATP is bound by residues 30–33, Lys51, 87–91, Gly415, 479–481, and Asp495; these read TLGP, DGTTT, and NAA. Residues 526 to 547 form a disordered region; the sequence is KKDEPTPPAAGGGMGGMGGMDF. Residues 535 to 547 show a composition bias toward gly residues; it reads AGGGMGGMGGMDF.

The protein belongs to the chaperonin (HSP60) family. In terms of assembly, forms a cylinder of 14 subunits composed of two heptameric rings stacked back-to-back. Interacts with the co-chaperonin GroES.

It is found in the cytoplasm. It catalyses the reaction ATP + H2O + a folded polypeptide = ADP + phosphate + an unfolded polypeptide.. Together with its co-chaperonin GroES, plays an essential role in assisting protein folding. The GroEL-GroES system forms a nano-cage that allows encapsulation of the non-native substrate proteins and provides a physical environment optimized to promote and accelerate protein folding. The sequence is that of Chaperonin GroEL from Xylella fastidiosa (strain M12).